The sequence spans 253 residues: Ditrans,polycis-undecaprenyl-diphosphate synthase ((2E,6E)-farnesyl-diphosphate specific) (253 aa).

The active site involves D26. D26 is a binding site for Mg(2+). Residues 27–30 (GNGR), W31, R39, H43, and 71–73 (SSE) each bind substrate. N74 (proton acceptor) is an active-site residue. Substrate is bound by residues W75, R77, and R194. H199 contributes to the Mg(2+) binding site. 200–202 (RIS) serves as a coordination point for substrate. E213 provides a ligand contact to Mg(2+).

The protein belongs to the UPP synthase family. Homodimer. The cofactor is Mg(2+).

It carries out the reaction 8 isopentenyl diphosphate + (2E,6E)-farnesyl diphosphate = di-trans,octa-cis-undecaprenyl diphosphate + 8 diphosphate. Functionally, catalyzes the sequential condensation of isopentenyl diphosphate (IPP) with (2E,6E)-farnesyl diphosphate (E,E-FPP) to yield (2Z,6Z,10Z,14Z,18Z,22Z,26Z,30Z,34E,38E)-undecaprenyl diphosphate (di-trans,octa-cis-UPP). UPP is the precursor of glycosyl carrier lipid in the biosynthesis of bacterial cell wall polysaccharide components such as peptidoglycan and lipopolysaccharide. This chain is Ditrans,polycis-undecaprenyl-diphosphate synthase ((2E,6E)-farnesyl-diphosphate specific), found in Shigella flexneri.